Consider the following 480-residue polypeptide: Uridine 5'-monophosphate synthase (480 aa).

The residue at position 2 (Ala2) is an N-acetylalanine. The interval Ala2 to Ser214 is OPRTase. At Tyr37 the chain carries Phosphotyrosine. A Phosphoserine modification is found at Ser214. A domain linker region spans residues Leu215–Lys220. The segment at Glu221–Val480 is OMPdecase. Ser257 contributes to the orotidine 5'-phosphate binding site. Residues Ser257, Asp259, and Lys281–His283 each bind UMP. Orotidine 5'-phosphate contacts are provided by residues Lys281, Lys314, Asp317, Thr321, Ser372, Gln430 to Tyr432, and Gly450 to Arg451. Residues Lys314 and Asp317 each act as for OMPdecase activity in the active site. UMP-binding positions include Asp317, Thr321, Ser372, Gln430–Tyr432, and Gly450–Arg451.

In the N-terminal section; belongs to the purine/pyrimidine phosphoribosyltransferase family. This sequence in the C-terminal section; belongs to the OMP decarboxylase family. As to quaternary structure, homodimer; dimerization is required for enzymatic activity.

It catalyses the reaction orotidine 5'-phosphate + diphosphate = orotate + 5-phospho-alpha-D-ribose 1-diphosphate. The enzyme catalyses orotidine 5'-phosphate + H(+) = UMP + CO2. It functions in the pathway pyrimidine metabolism; UMP biosynthesis via de novo pathway; UMP from orotate: step 1/2. Its pathway is pyrimidine metabolism; UMP biosynthesis via de novo pathway; UMP from orotate: step 2/2. Functionally, bifunctional enzyme catalyzing the last two steps of de novo pyrimidine biosynthesis, orotate phosphoribosyltransferase (OPRT), which converts orotate to orotidine-5'-monophosphate (OMP), and orotidine-5'-monophosphate decarboxylase (ODC), the terminal enzymatic reaction that decarboxylates OMP to uridine monophosphate (UMP). The sequence is that of Uridine 5'-monophosphate synthase (UMPS) from Bos taurus (Bovine).